Here is a 540-residue protein sequence, read N- to C-terminus: T-complex protein 1 subunit delta (540 aa).

Residues 1-12 (MPPAVPAAAATA) are compositionally biased toward low complexity. The interval 1–32 (MPPAVPAAAATARQSASGRERNFKDKDKPESV) is disordered. A compositionally biased stretch (basic and acidic residues) spans 18-31 (GRERNFKDKDKPES).

Belongs to the TCP-1 chaperonin family. In terms of assembly, heterooligomeric complex of about 850 to 900 kDa that forms two stacked rings, 12 to 16 nm in diameter.

The protein resides in the cytoplasm. Its function is as follows. Molecular chaperone; assists the folding of proteins upon ATP hydrolysis. Known to play a role, in vitro, in the folding of actin and tubulin. The sequence is that of T-complex protein 1 subunit delta (cct-4) from Caenorhabditis elegans.